Here is a 915-residue protein sequence, read N- to C-terminus: Translation initiation factor IF-2 (915 aa).

Disordered regions lie at residues 1 to 105 (MSEG…RALT) and 121 to 295 (VEAA…RAAI). Low complexity predominate over residues 57–81 (PGTPSAPEGGSSSAPAPQSGNAPQG). A compositionally biased stretch (gly residues) spans 84–101 (RSGGGNRGSGRGGAGGAG). Composition is skewed to basic and acidic residues over residues 121–135 (VEAARREVERREQEK) and 143–180 (EEARRREEEAKRAAEEEARRKEQEEADRIAAEAARKAA). Pro residues predominate over residues 186–195 (AEAPPVPPPA). 2 stretches are compositionally biased toward low complexity: residues 201 to 213 (AAPSSRSAPSRTA) and 230 to 239 (KVPVAAPSAP). Positions 243 to 256 (RLRERGDEGEEERK) are enriched in basic and acidic residues. Low complexity predominate over residues 266–278 (PAPRKAAAPVAKK). Over residues 279–295 (AVAEPRRGGRIDVRAAI) the composition is skewed to basic and acidic residues. The tr-type G domain maps to 414–584 (PRPPVVTVMG…LLQAEVLDLK (171 aa)). Residues 423-430 (GHVDHGKT) are G1. 423 to 430 (GHVDHGKT) provides a ligand contact to GTP. A G2 region spans residues 448–452 (GITQH). The segment at 470–473 (DTPG) is G3. Residues 470 to 474 (DTPGH) and 524 to 527 (NKCD) each bind GTP. The tract at residues 524 to 527 (NKCD) is G4. Residues 560-562 (SAL) form a G5 region.

Belongs to the TRAFAC class translation factor GTPase superfamily. Classic translation factor GTPase family. IF-2 subfamily.

The protein localises to the cytoplasm. Functionally, one of the essential components for the initiation of protein synthesis. Protects formylmethionyl-tRNA from spontaneous hydrolysis and promotes its binding to the 30S ribosomal subunits. Also involved in the hydrolysis of GTP during the formation of the 70S ribosomal complex. This Granulibacter bethesdensis (strain ATCC BAA-1260 / CGDNIH1) protein is Translation initiation factor IF-2.